We begin with the raw amino-acid sequence, 251 residues long: 5'-nucleotidase SurE (251 aa).

Positions 8, 9, 39, and 91 each coordinate a divalent metal cation.

It belongs to the SurE nucleotidase family. It depends on a divalent metal cation as a cofactor.

The protein localises to the cytoplasm. The enzyme catalyses a ribonucleoside 5'-phosphate + H2O = a ribonucleoside + phosphate. Functionally, nucleotidase that shows phosphatase activity on nucleoside 5'-monophosphates. The polypeptide is 5'-nucleotidase SurE (Nitrosococcus oceani (strain ATCC 19707 / BCRC 17464 / JCM 30415 / NCIMB 11848 / C-107)).